The chain runs to 411 residues: Dual-specificity RNA methyltransferase RlmN (411 aa).

Catalysis depends on glutamate 124, which acts as the Proton acceptor. Residues 130-379 (EEGRGTLCIS…IRTPRGRDIL (250 aa)) form the Radical SAM core domain. A disulfide bridge connects residues cysteine 137 and cysteine 382. [4Fe-4S] cluster is bound by residues cysteine 144, cysteine 148, and cysteine 151. Residues 208 to 209 (GE), serine 240, 262 to 264 (SLH), and asparagine 339 each bind S-adenosyl-L-methionine. Catalysis depends on cysteine 382, which acts as the S-methylcysteine intermediate.

It belongs to the radical SAM superfamily. RlmN family. [4Fe-4S] cluster serves as cofactor.

The protein localises to the cytoplasm. The catalysed reaction is adenosine(2503) in 23S rRNA + 2 reduced [2Fe-2S]-[ferredoxin] + 2 S-adenosyl-L-methionine = 2-methyladenosine(2503) in 23S rRNA + 5'-deoxyadenosine + L-methionine + 2 oxidized [2Fe-2S]-[ferredoxin] + S-adenosyl-L-homocysteine. It catalyses the reaction adenosine(37) in tRNA + 2 reduced [2Fe-2S]-[ferredoxin] + 2 S-adenosyl-L-methionine = 2-methyladenosine(37) in tRNA + 5'-deoxyadenosine + L-methionine + 2 oxidized [2Fe-2S]-[ferredoxin] + S-adenosyl-L-homocysteine. Its function is as follows. Specifically methylates position 2 of adenine 2503 in 23S rRNA and position 2 of adenine 37 in tRNAs. m2A2503 modification seems to play a crucial role in the proofreading step occurring at the peptidyl transferase center and thus would serve to optimize ribosomal fidelity. The chain is Dual-specificity RNA methyltransferase RlmN from Rhizobium meliloti (strain 1021) (Ensifer meliloti).